Consider the following 78-residue polypeptide: Defensin-like protein 308 (78 aa).

Positions 1–19 are cleaved as a signal peptide; the sequence is MKTSAFFIAVLLILSCSSS. 3 disulfides stabilise this stretch: C31/C50, C37/C55, and C41/C57.

This sequence belongs to the DEFL family.

Its subcellular location is the secreted. In Arabidopsis thaliana (Mouse-ear cress), this protein is Defensin-like protein 308.